A 382-amino-acid chain; its full sequence is Mannitol-1-phosphate 5-dehydrogenase (382 aa).

Residue 3–14 coordinates NAD(+); the sequence is ALHFGAGNIGRG. Position 269 is an N6-acetyllysine (lysine 269).

This sequence belongs to the mannitol dehydrogenase family. Monomer.

It carries out the reaction D-mannitol 1-phosphate + NAD(+) = beta-D-fructose 6-phosphate + NADH + H(+). The sequence is that of Mannitol-1-phosphate 5-dehydrogenase from Escherichia coli O157:H7.